The sequence spans 419 residues: Tryptophan synthase beta chain (419 aa).

Lys-86 carries the N6-(pyridoxal phosphate)lysine modification. Positions 394-403 (VEQQKVEQQK) are enriched in basic and acidic residues. Residues 394–419 (VEQQKVEQQKADNQNTEKNNQESGNE) form a disordered region. Over residues 404-419 (ADNQNTEKNNQESGNE) the composition is skewed to polar residues.

Belongs to the TrpB family. In terms of assembly, tetramer of two alpha and two beta chains. Requires pyridoxal 5'-phosphate as cofactor.

The catalysed reaction is (1S,2R)-1-C-(indol-3-yl)glycerol 3-phosphate + L-serine = D-glyceraldehyde 3-phosphate + L-tryptophan + H2O. It participates in amino-acid biosynthesis; L-tryptophan biosynthesis; L-tryptophan from chorismate: step 5/5. Its function is as follows. The beta subunit is responsible for the synthesis of L-tryptophan from indole and L-serine. This Shewanella halifaxensis (strain HAW-EB4) protein is Tryptophan synthase beta chain.